Here is a 330-residue protein sequence, read N- to C-terminus: Aspartate--ammonia ligase (330 aa).

This sequence belongs to the class-II aminoacyl-tRNA synthetase family. AsnA subfamily.

It is found in the cytoplasm. The enzyme catalyses L-aspartate + NH4(+) + ATP = L-asparagine + AMP + diphosphate + H(+). It functions in the pathway amino-acid biosynthesis; L-asparagine biosynthesis; L-asparagine from L-aspartate (ammonia route): step 1/1. The chain is Aspartate--ammonia ligase from Streptococcus pyogenes serotype M2 (strain MGAS10270).